The chain runs to 37 residues: Large ribosomal subunit protein bL36c (37 aa).

The protein belongs to the bacterial ribosomal protein bL36 family.

The protein resides in the plastid. It is found in the chloroplast. In Acorus calamus (Sweet flag), this protein is Large ribosomal subunit protein bL36c.